Consider the following 166-residue polypeptide: Cyclin-dependent kinase 4 inhibitor D (166 aa).

Met-1 carries the post-translational modification N-acetylmethionine. ANK repeat units lie at residues 41–69, 73–102, 106–135, and 138–166; these read FGKT…SPNV, SGTS…DVNV, TGAL…LHRR, and RGLT…VAPL.

This sequence belongs to the CDKN2 cyclin-dependent kinase inhibitor family. As to quaternary structure, interacts with CDK6.

The protein resides in the nucleus. The protein localises to the cytoplasm. Functionally, interacts strongly with CDK4 and CDK6 and inhibits them. This is Cyclin-dependent kinase 4 inhibitor D (CDKN2D) from Homo sapiens (Human).